Here is a 223-residue protein sequence, read N- to C-terminus: Sugar fermentation stimulation protein homolog (223 aa).

The protein belongs to the SfsA family.

The chain is Sugar fermentation stimulation protein homolog from Thermosipho melanesiensis (strain DSM 12029 / CIP 104789 / BI429).